The sequence spans 438 residues: V-type ATP synthase beta chain (438 aa).

Belongs to the ATPase alpha/beta chains family.

Its function is as follows. Produces ATP from ADP in the presence of a proton gradient across the membrane. The V-type beta chain is a regulatory subunit. In Chlamydia trachomatis serovar A (strain ATCC VR-571B / DSM 19440 / HAR-13), this protein is V-type ATP synthase beta chain.